Here is an 88-residue protein sequence, read N- to C-terminus: Large ribosomal subunit protein bL31B (88 aa).

Belongs to the bacterial ribosomal protein bL31 family. Type B subfamily. Part of the 50S ribosomal subunit.

In Janthinobacterium sp. (strain Marseille) (Minibacterium massiliensis), this protein is Large ribosomal subunit protein bL31B.